We begin with the raw amino-acid sequence, 109 residues long: Nucleoid-associated protein CC_0268 (109 aa).

This sequence belongs to the YbaB/EbfC family. As to quaternary structure, homodimer.

It localises to the cytoplasm. The protein localises to the nucleoid. Functionally, binds to DNA and alters its conformation. May be involved in regulation of gene expression, nucleoid organization and DNA protection. The protein is Nucleoid-associated protein CC_0268 of Caulobacter vibrioides (strain ATCC 19089 / CIP 103742 / CB 15) (Caulobacter crescentus).